We begin with the raw amino-acid sequence, 108 residues long: Movement protein TGB2 (108 aa).

Residues 1-8 (MPLTPPPN) are Cytoplasmic-facing. The helical transmembrane segment at 9 to 29 (YTGLYIAAALGVSLAAVVALF) threads the bilayer. The Lumenal segment spans residues 30–72 (TRSTLPIVGDSQHNLPHGGRYRDGTKAIDYFKPTKLNSVEPGN). Residues 73–93 (YWYTQPWLLVILLVALICLSG) traverse the membrane as a helical segment. The Cytoplasmic segment spans residues 94–108 (RHAQCCPRCNRVHSA).

It belongs to the Tymovirales TGBp2 protein family.

The protein resides in the host endoplasmic reticulum membrane. Functionally, plays a role in viral cell-to-cell propagation, by facilitating genome transport to neighboring plant cells through plasmosdesmata,. This is Movement protein TGB2 from Solanum tuberosum (Potato).